The chain runs to 156 residues: 6,7-dimethyl-8-ribityllumazine synthase (156 aa).

5-amino-6-(D-ribitylamino)uracil is bound by residues F23, 57–59 (AFE), and 81–83 (AII). 86–87 (ST) provides a ligand contact to (2S)-2-hydroxy-3-oxobutyl phosphate. H89 acts as the Proton donor in catalysis. Residue F114 coordinates 5-amino-6-(D-ribitylamino)uracil. R128 lines the (2S)-2-hydroxy-3-oxobutyl phosphate pocket.

The protein belongs to the DMRL synthase family.

The catalysed reaction is (2S)-2-hydroxy-3-oxobutyl phosphate + 5-amino-6-(D-ribitylamino)uracil = 6,7-dimethyl-8-(1-D-ribityl)lumazine + phosphate + 2 H2O + H(+). The protein operates within cofactor biosynthesis; riboflavin biosynthesis; riboflavin from 2-hydroxy-3-oxobutyl phosphate and 5-amino-6-(D-ribitylamino)uracil: step 1/2. In terms of biological role, catalyzes the formation of 6,7-dimethyl-8-ribityllumazine by condensation of 5-amino-6-(D-ribitylamino)uracil with 3,4-dihydroxy-2-butanone 4-phosphate. This is the penultimate step in the biosynthesis of riboflavin. In Wolinella succinogenes (strain ATCC 29543 / DSM 1740 / CCUG 13145 / JCM 31913 / LMG 7466 / NCTC 11488 / FDC 602W) (Vibrio succinogenes), this protein is 6,7-dimethyl-8-ribityllumazine synthase.